The chain runs to 382 residues: Elongation factor Tu (382 aa).

Residues 1 to 7, 62 to 66, and 117 to 120 contribute to the GTP site; these read HVDHGKT, DCPGH, and NKVD. Residues 1–190 form the tr-type G domain; it reads HVDHGKTTLT…AVDEYIPTPQ (190 aa). Residue T7 participates in Mg(2+) binding.

Belongs to the TRAFAC class translation factor GTPase superfamily. Classic translation factor GTPase family. EF-Tu/EF-1A subfamily. Monomer.

Its subcellular location is the cytoplasm. The enzyme catalyses GTP + H2O = GDP + phosphate + H(+). Its function is as follows. GTP hydrolase that promotes the GTP-dependent binding of aminoacyl-tRNA to the A-site of ribosomes during protein biosynthesis. The sequence is that of Elongation factor Tu from Chloroflexus aurantiacus.